A 959-amino-acid chain; its full sequence is Lon protease homolog, mitochondrial (959 aa).

The transit peptide at 1-67 (MAASTGYVRL…GPAIGGQWRG (67 aa)) directs the protein to the mitochondrion. 2 disordered regions span residues 77 to 102 (GAFS…GSAG) and 218 to 257 (RQLE…HPAE). Residues 91–102 (EEGAGGAGGSAG) are compositionally biased toward gly residues. The 247-residue stretch at 124 to 370 (LPLIAITRNP…KALSLLKKEF (247 aa)) folds into the Lon N-terminal domain. Residues 233–243 (HKPRRKSKRGK) are compositionally biased toward basic residues. The segment covering 244–256 (KEAEDELSARHPA) has biased composition (basic and acidic residues). 523 to 530 (GPPGVGKT) is a binding site for ATP. The Lon proteolytic domain occupies 759–949 (VTPPGVVMGL…REIFDIAFPD (191 aa)). Active-site residues include Ser855 and Lys898.

It belongs to the peptidase S16 family. Homohexamer. Organized in a ring with a central cavity. The ATP-binding and proteolytic domains (AP-domain) form a hexameric chamber, while the N-terminal domain is arranged as a trimer of dimers. DNA and RNA binding is stimulated by substrate and inhibited by ATP binding. Interacts with TWNK and mitochondrial DNA polymerase subunit POLG. As to expression, duodenum, heart, lung and liver, but not thymus.

The protein resides in the mitochondrion matrix. The catalysed reaction is Hydrolysis of proteins in presence of ATP.. With respect to regulation, peptidase activity is subject to substrate inhibition by ATP. ATP-dependent serine protease that mediates the selective degradation of misfolded, unassembled or oxidatively damaged polypeptides as well as certain short-lived regulatory proteins in the mitochondrial matrix. Endogenous substrates include mitochondrial steroidogenic acute regulatory (StAR) protein, DELE1, helicase Twinkle (TWNK) and the large ribosomal subunit protein MRPL32/bL32m. MRPL32/bL32m is protected from degradation by LONP1 when it is bound to a nucleic acid (RNA), but TWNK is not. May also have a chaperone function in the assembly of inner membrane protein complexes. Participates in the regulation of mitochondrial gene expression and in the maintenance of the integrity of the mitochondrial genome. Binds to mitochondrial promoters and RNA in a single-stranded, site-specific, and strand-specific manner. May regulate mitochondrial DNA replication and/or gene expression using site-specific, single-stranded DNA binding to target the degradation of regulatory proteins binding to adjacent sites in mitochondrial promoters. This Homo sapiens (Human) protein is Lon protease homolog, mitochondrial.